We begin with the raw amino-acid sequence, 640 residues long: Threonine--tRNA ligase (640 aa).

Residues 224-525 (DHRKLGKELD…LTEHYAGAFP (302 aa)) are catalytic. Zn(2+) is bound by residues C323, H374, and H502.

It belongs to the class-II aminoacyl-tRNA synthetase family. In terms of assembly, homodimer. Requires Zn(2+) as cofactor.

The protein localises to the cytoplasm. It catalyses the reaction tRNA(Thr) + L-threonine + ATP = L-threonyl-tRNA(Thr) + AMP + diphosphate + H(+). Catalyzes the attachment of threonine to tRNA(Thr) in a two-step reaction: L-threonine is first activated by ATP to form Thr-AMP and then transferred to the acceptor end of tRNA(Thr). Also edits incorrectly charged L-seryl-tRNA(Thr). The chain is Threonine--tRNA ligase from Tropheryma whipplei (strain Twist) (Whipple's bacillus).